Consider the following 258-residue polypeptide: UPF0246 protein YaaA (258 aa).

This sequence belongs to the UPF0246 family.

The chain is UPF0246 protein YaaA from Escherichia coli (strain K12 / MC4100 / BW2952).